A 568-amino-acid polypeptide reads, in one-letter code: Proline--tRNA ligase (568 aa).

It belongs to the class-II aminoacyl-tRNA synthetase family. ProS type 1 subfamily. In terms of assembly, homodimer.

It is found in the cytoplasm. It catalyses the reaction tRNA(Pro) + L-proline + ATP = L-prolyl-tRNA(Pro) + AMP + diphosphate. In terms of biological role, catalyzes the attachment of proline to tRNA(Pro) in a two-step reaction: proline is first activated by ATP to form Pro-AMP and then transferred to the acceptor end of tRNA(Pro). As ProRS can inadvertently accommodate and process non-cognate amino acids such as alanine and cysteine, to avoid such errors it has two additional distinct editing activities against alanine. One activity is designated as 'pretransfer' editing and involves the tRNA(Pro)-independent hydrolysis of activated Ala-AMP. The other activity is designated 'posttransfer' editing and involves deacylation of mischarged Ala-tRNA(Pro). The misacylated Cys-tRNA(Pro) is not edited by ProRS. In Halorhodospira halophila (strain DSM 244 / SL1) (Ectothiorhodospira halophila (strain DSM 244 / SL1)), this protein is Proline--tRNA ligase.